The sequence spans 400 residues: S-adenosylmethionine synthase (400 aa).

An ATP-binding site is contributed by 136–141 (GQGSVD).

The protein belongs to the AdoMet synthase 2 family. Mg(2+) is required as a cofactor.

It carries out the reaction L-methionine + ATP + H2O = S-adenosyl-L-methionine + phosphate + diphosphate. It participates in amino-acid biosynthesis; S-adenosyl-L-methionine biosynthesis; S-adenosyl-L-methionine from L-methionine: step 1/1. Its function is as follows. Catalyzes the formation of S-adenosylmethionine from methionine and ATP. The polypeptide is S-adenosylmethionine synthase (mat) (Thermoplasma acidophilum (strain ATCC 25905 / DSM 1728 / JCM 9062 / NBRC 15155 / AMRC-C165)).